Reading from the N-terminus, the 105-residue chain is Dynein axonemal light chain 4 (105 aa).

This sequence belongs to the dynein light chain family. Consists of at least two heavy chains and a number of intermediate and light chains.

It localises to the cytoplasm. The protein localises to the cytoskeleton. The protein resides in the cilium axoneme. Functionally, force generating protein of respiratory cilia. Produces force towards the minus ends of microtubules. Dynein has ATPase activity. The polypeptide is Dynein axonemal light chain 4 (DNAL4) (Bos taurus (Bovine)).